The primary structure comprises 342 residues: NADPH-dependent methylglyoxal reductase GRE2 (342 aa).

Residues 7-12, Arg32, Lys36, 57-58, Tyr165, Lys169, Val199, and Ser216 contribute to the NADP(+) site; these read GANGFI and DI. The active-site Proton donor is Lys169. Ser333 bears the Phosphoserine mark.

The protein belongs to the NAD(P)-dependent epimerase/dehydratase family. Dihydroflavonol-4-reductase subfamily. In terms of assembly, monomer. The N-terminus is blocked.

Its subcellular location is the cytoplasm. The protein localises to the nucleus. The catalysed reaction is (S)-lactaldehyde + NADP(+) = methylglyoxal + NADPH + H(+). It catalyses the reaction 3-methylbutanol + NADP(+) = 3-methylbutanal + NADPH + H(+). The enzyme catalyses 2,5-hexanedione + 2 NADPH + 2 H(+) = (2S,5S)-hexanediol + 2 NADP(+). It carries out the reaction (S)-3-chloro-1-phenyl-1-propanol + NADP(+) = 3-chloro-1-phenyl-1-propanone + NADPH + H(+). Its activity is regulated as follows. Activated by glutathione. Its function is as follows. Catalyzes the irreversible reduction of the cytotoxic compound methylglyoxal (MG, 2-oxopropanal) to (S)-lactaldehyde as an alternative to detoxification of MG by glyoxalase I GLO1. MG is synthesized via a bypath of glycolysis from dihydroxyacetone phosphate and is believed to play a role in cell cycle regulation and stress adaptation. Also catalyzes the reduction of 3-methylbutanal to 3-methylbutanol. Acts as a suppressor of 3-methylbutanol-induced filamentation by modulating the levels of 3-methylbutanal, the signal to which cells respond by filamentation. Also involved in ergosterol metabolism. In Saccharomyces cerevisiae (strain ATCC 204508 / S288c) (Baker's yeast), this protein is NADPH-dependent methylglyoxal reductase GRE2 (GRE2).